The chain runs to 409 residues: AT-rich interactive domain-containing protein 3C (409 aa).

Residues 1–14 (MEALQRQQAARLAQ) show a composition bias toward low complexity. The interval 1 to 91 (MEALQRQQAA…SPSSQSPGIQ (91 aa)) is disordered. Residues 19–30 (LAPPRLPLPQPP) are compositionally biased toward pro residues. The segment covering 49–70 (AEEEEGAEDEEGETPLAEEETA) has biased composition (acidic residues). The region spanning 110 to 202 (DPKRKEFLDD…YLYPYECETR (93 aa)) is the ARID domain. 3 disordered regions span residues 233 to 274 (NLAG…PAHA), 306 to 333 (TREK…RLGA), and 385 to 409 (PVPA…STLP). Residues 235–257 (AGPTPRGAPGPASSHGPAPTATP) show a composition bias toward low complexity. The REKLES domain occupies 301–386 (LASEATREKL…GILFARRQPV (86 aa)). Basic and acidic residues predominate over residues 306–320 (TREKLAPEEPPEKRA). Pro residues predominate over residues 393–402 (TNPPPLPSTG).

Interacts (via REKLES DOMAIN) with NPM1; the interaction mediates ARID3C nuclear shuttling.

The protein localises to the nucleus. In terms of biological role, transcription factor involved in monocyte-to-macrophage differentiation. Forms a complex with NPM1 to translocate to the nucleus, acting as a transcription factor that promotes the expression of the genes involved in macrophage differentiation, such as STAT3, STAT1 and JUNB. In Mus musculus (Mouse), this protein is AT-rich interactive domain-containing protein 3C (Arid3c).